Reading from the N-terminus, the 1562-residue chain is DNA-directed RNA polymerase subunit beta'' (1562 aa).

Residues 1–22 (MVKKKKFKTKNIQNPPFSSQNS) are disordered. The segment covering 11–22 (NIQNPPFSSQNS) has biased composition (polar residues). Zn(2+)-binding residues include Cys275, Cys338, Cys345, and Cys348.

This sequence belongs to the RNA polymerase beta' chain family. RpoC2 subfamily. In terms of assembly, in plastids the minimal PEP RNA polymerase catalytic core is composed of four subunits: alpha, beta, beta', and beta''. When a (nuclear-encoded) sigma factor is associated with the core the holoenzyme is formed, which can initiate transcription. Zn(2+) serves as cofactor.

It is found in the plastid. It localises to the chloroplast. It carries out the reaction RNA(n) + a ribonucleoside 5'-triphosphate = RNA(n+1) + diphosphate. In terms of biological role, DNA-dependent RNA polymerase catalyzes the transcription of DNA into RNA using the four ribonucleoside triphosphates as substrates. This chain is DNA-directed RNA polymerase subunit beta'', found in Chlorella vulgaris (Green alga).